The sequence spans 307 residues: MKISLVVPVFNEEEAIPVFYKTVREFQELKPYEVEIVFINDGSKDATESIINALAVSDPLVVPLSFTRNFGKEPALFAGLDHASGDAVIPIDVDLQDPIEVIPHLIEKWQAGADMVLAKRSDRSTDGRLKRKTAEWFYKLHNKISTPKIEENVGDFRLMSREVVENIKLLPERNLFMKGILSWVGGQTDVVEYVRAERVAGISKFNGWKLWNLALEGITSFSTFPLRVWTYIGLFVASISFLYGAWMIIDTLVFGNPVRGYPSLLVSILFLGGVQLIGIGVLGEYIGRIYIESKHRPKYIIKNEKQK.

The next 2 helical transmembrane spans lie at Trp229 to Ile249 and Ser263 to Gly283.

Belongs to the glycosyltransferase 2 family. GtrB subfamily.

The protein resides in the host membrane. Involved in O antigen modification. Catalyzes the transfer of the glucose residue from UDP-glucose to a lipid carrier. The chain is Bactoprenol glucosyl transferase (gtrB) from Shigella phage SfV (Shigella flexneri bacteriophage V).